A 429-amino-acid polypeptide reads, in one-letter code: Enolase (429 aa).

Position 164 (glutamine 164) interacts with (2R)-2-phosphoglycerate. Glutamate 206 functions as the Proton donor in the catalytic mechanism. The Mg(2+) site is built by aspartate 243, glutamate 286, and aspartate 313. 4 residues coordinate (2R)-2-phosphoglycerate: lysine 338, arginine 367, serine 368, and lysine 389. Lysine 338 functions as the Proton acceptor in the catalytic mechanism.

It belongs to the enolase family. It depends on Mg(2+) as a cofactor.

The protein localises to the cytoplasm. The protein resides in the secreted. It is found in the cell surface. It catalyses the reaction (2R)-2-phosphoglycerate = phosphoenolpyruvate + H2O. It participates in carbohydrate degradation; glycolysis; pyruvate from D-glyceraldehyde 3-phosphate: step 4/5. Functionally, catalyzes the reversible conversion of 2-phosphoglycerate (2-PG) into phosphoenolpyruvate (PEP). It is essential for the degradation of carbohydrates via glycolysis. This Thermosipho africanus (strain TCF52B) protein is Enolase.